The sequence spans 195 residues: uncharacterized protein (195 aa).

Disordered stretches follow at residues 1 to 51 (MTHN…GPSY) and 160 to 195 (SYSQ…KSCN). Residues 13–28 (SYQNQAPQPQYYTRQP) show a composition bias toward polar residues. Basic residues predominate over residues 170-189 (YYKKHKHHSHHRPKHVKSSR).

This is an uncharacterized protein from Acanthamoeba polyphaga mimivirus (APMV).